The chain runs to 318 residues: Forkhead box protein I2 (318 aa).

Residues 1-30 (MATYCDDLGPSSAPPGQAQATAHPPGYEPG) form a disordered region. Residues 102-196 (RPPYSYSALI…DNGNFRRKRK (95 aa)) constitute a DNA-binding region (fork-head).

Its subcellular location is the nucleus. Its function is as follows. Possible transcriptional activator. In Homo sapiens (Human), this protein is Forkhead box protein I2 (FOXI2).